A 444-amino-acid chain; its full sequence is Argininosuccinate synthase (444 aa).

Residues 18–26 (AFSGGLDTS) and Ala-44 each bind ATP. An L-citrulline-binding site is contributed by Tyr-100. 2 residues coordinate ATP: Gly-130 and Thr-132. L-aspartate is bound by residues Thr-132, Asn-136, and Asp-137. Position 136 (Asn-136) interacts with L-citrulline. Asp-137 lines the ATP pocket. L-citrulline is bound by residues Arg-140 and Ser-193. Position 195 (Asp-195) interacts with ATP. L-citrulline contacts are provided by Thr-202, Glu-204, and Glu-281.

Belongs to the argininosuccinate synthase family. Type 2 subfamily. Homotetramer.

The protein resides in the cytoplasm. It carries out the reaction L-citrulline + L-aspartate + ATP = 2-(N(omega)-L-arginino)succinate + AMP + diphosphate + H(+). The protein operates within amino-acid biosynthesis; L-arginine biosynthesis; L-arginine from L-ornithine and carbamoyl phosphate: step 2/3. The sequence is that of Argininosuccinate synthase from Actinobacillus succinogenes (strain ATCC 55618 / DSM 22257 / CCUG 43843 / 130Z).